The chain runs to 812 residues: Phosphoenolpyruvate synthase (812 aa).

His-430 acts as the Tele-phosphohistidine intermediate in catalysis. Substrate contacts are provided by Arg-520, Arg-588, Glu-690, Gly-711, Ser-712, Asn-713, and Asp-714. Residue Glu-690 participates in Mg(2+) binding. A Mg(2+)-binding site is contributed by Asp-714. Cys-761 acts as the Proton donor in catalysis.

It belongs to the PEP-utilizing enzyme family. Mg(2+) is required as a cofactor.

It catalyses the reaction pyruvate + ATP + H2O = phosphoenolpyruvate + AMP + phosphate + 2 H(+). It functions in the pathway carbohydrate biosynthesis; gluconeogenesis. In terms of biological role, catalyzes the phosphorylation of pyruvate to phosphoenolpyruvate. This is Phosphoenolpyruvate synthase (ppsA) from Helicobacter pylori (strain ATCC 700392 / 26695) (Campylobacter pylori).